A 1273-amino-acid chain; its full sequence is Protein transport protein SEC31 (1273 aa).

WD repeat units follow at residues glutamate 6–serine 46, glutamine 60–asparagine 99, asparagine 106–serine 146, serine 158–histidine 198, glycine 207–glutamine 250, glycine 255–glutamine 295, and alanine 298–aspartate 338. Position 349 is a phosphoserine (serine 349). Residues histidine 385 to threonine 405 form a WD 8; interaction with SEC13 repeat. The disordered stretch occupies residues threonine 815 to alanine 835. Phosphoserine is present on residues serine 836, serine 974, serine 977, serine 980, serine 988, serine 992, and serine 999. The tract at residues proline 933–valine 1162 is disordered. Residues valine 994–proline 1039 are compositionally biased toward polar residues. Threonine 1050 is modified (phosphothreonine). Serine 1053 is subject to Phosphoserine. Positions threonine 1071 to threonine 1094 are enriched in polar residues. The segment covering serine 1095–isoleucine 1110 has biased composition (pro residues). A compositionally biased stretch (polar residues) spans lysine 1118–glycine 1129. Residues alanine 1130–glutamine 1154 show a composition bias toward low complexity.

It belongs to the WD repeat SEC31 family. As to quaternary structure, the COPII coat is composed of at least 5 proteins: the SEC23/24 complex, the SEC13/31 complex, and the protein SAR1. SEC13 and SEC31 make a 2:2 tetramer that forms the edge element of the COPII outer coat. The tetramer self-assembles in multiple copies to form the complete polyhedral cage. Interacts (via WD 8) with SEC13. Interacts with EMP24, ERV25, SEC16 and SHR3.

The protein localises to the cytoplasmic vesicle. The protein resides in the COPII-coated vesicle membrane. It is found in the endoplasmic reticulum membrane. In terms of biological role, component of the coat protein complex II (COPII) which promotes the formation of transport vesicles from the endoplasmic reticulum (ER). The coat has two main functions, the physical deformation of the endoplasmic reticulum membrane into vesicles and the selection of cargo molecules. This chain is Protein transport protein SEC31 (SEC31), found in Saccharomyces cerevisiae (strain ATCC 204508 / S288c) (Baker's yeast).